A 126-amino-acid chain; its full sequence is Glycine cleavage system H protein (126 aa).

The Lipoyl-binding domain maps to Thr24 to Lys106. Lys65 is modified (N6-lipoyllysine).

This sequence belongs to the GcvH family. In terms of assembly, the glycine cleavage system is composed of four proteins: P, T, L and H. It depends on (R)-lipoate as a cofactor.

The glycine cleavage system catalyzes the degradation of glycine. The H protein shuttles the methylamine group of glycine from the P protein to the T protein. The chain is Glycine cleavage system H protein from Psychrobacter sp. (strain PRwf-1).